Here is a 718-residue protein sequence, read N- to C-terminus: Receptor-like protein 36 (718 aa).

A signal peptide spans Met1–Ala26. Residues Cys27–Trp695 lie on the Extracellular side of the membrane. LRR repeat units lie at residues Asp70–Leu94, Ser95–Leu118, Gln120–Asn141, Thr143–Leu165, Thr166–Gly188, Leu189–Ile213, Pro214–Leu238, Ser239–Lys261, Leu262–Val286, Asn288–Ser310, Lys312–Asp334, Gly335–Val359, Lys360–Ser383, Thr384–Lys406, Asp407–Cys431, Arg433–Ser454, Leu455–Gly480, and Phe481–Asn505. N-linked (GlcNAc...) asparagine glycosylation occurs at Asn93. 2 N-linked (GlcNAc...) asparagine glycosylation sites follow: Asn141 and Asn164. N-linked (GlcNAc...) asparagine glycosylation occurs at Asn199. N-linked (GlcNAc...) asparagine glycosylation occurs at Asn288. 2 N-linked (GlcNAc...) asparagine glycosylation sites follow: Asn373 and Asn393. Asn528 carries N-linked (GlcNAc...) asparagine glycosylation. 4 LRR repeats span residues Phe550–Leu574, Ser575–Ile598, Thr599–Leu622, and Phe624–Thr647. 5 N-linked (GlcNAc...) asparagine glycosylation sites follow: Asn581, Asn597, Asn610, Asn629, and Asn649. The helical transmembrane segment at Ile696–Phe716 threads the bilayer. Over Thr717–Ser718 the chain is Cytoplasmic.

The protein belongs to the RLP family.

It is found in the cell membrane. The protein is Receptor-like protein 36 of Arabidopsis thaliana (Mouse-ear cress).